The chain runs to 239 residues: 1-(5-phosphoribosyl)-5-[(5-phosphoribosylamino)methylideneamino] imidazole-4-carboxamide isomerase (239 aa).

Residue Asp-8 is the Proton acceptor of the active site. Asp-129 serves as the catalytic Proton donor.

It belongs to the HisA/HisF family.

The protein resides in the cytoplasm. The catalysed reaction is 1-(5-phospho-beta-D-ribosyl)-5-[(5-phospho-beta-D-ribosylamino)methylideneamino]imidazole-4-carboxamide = 5-[(5-phospho-1-deoxy-D-ribulos-1-ylimino)methylamino]-1-(5-phospho-beta-D-ribosyl)imidazole-4-carboxamide. It functions in the pathway amino-acid biosynthesis; L-histidine biosynthesis; L-histidine from 5-phospho-alpha-D-ribose 1-diphosphate: step 4/9. In Legionella pneumophila (strain Paris), this protein is 1-(5-phosphoribosyl)-5-[(5-phosphoribosylamino)methylideneamino] imidazole-4-carboxamide isomerase.